A 270-amino-acid polypeptide reads, in one-letter code: Fibroblast growth factor 5 (270 aa).

Positions 1-20 (MSLSLLLLLFLSHLILSAWA) are cleaved as a signal peptide. The tract at residues 26-84 (LAPKGQPGPAATGRNPGGAGGSSTSGGTTSSSSSSVSSAPGASPGIRGSGSEQGSFQWS) is disordered. The span at 40–49 (NPGGAGGSST) shows a compositional bias: gly residues. Residues 50-70 (SGGTTSSSSSSVSSAPGASPG) are compositionally biased toward low complexity. Polar residues predominate over residues 75–84 (GSEQGSFQWS). Residue Asn-112 is glycosylated (N-linked (GlcNAc...) asparagine). Positions 237–257 (EKKKPPSHVKPKVPLSAPRKS) are disordered.

Belongs to the heparin-binding growth factors family. In terms of assembly, interacts with FGFR1 and FGFR2. Affinity between fibroblast growth factors (FGFs) and their receptors is increased by heparan sulfate glycosaminoglycans that function as coreceptors.

The protein resides in the secreted. Its function is as follows. Plays an important role in the regulation of cell proliferation and cell differentiation. Required for normal regulation of the hair growth cycle. Functions as an inhibitor of hair elongation by promoting progression from anagen, the growth phase of the hair follicle, into catagen the apoptosis-induced regression phase. The protein is Fibroblast growth factor 5 (FGF5) of Canis lupus familiaris (Dog).